Here is a 195-residue protein sequence, read N- to C-terminus: GTP-dependent dephospho-CoA kinase (195 aa).

Residues aspartate 49, valine 50, aspartate 68, glutamate 127, and aspartate 150 each coordinate GTP.

This sequence belongs to the GTP-dependent DPCK family.

It catalyses the reaction 3'-dephospho-CoA + GTP = GDP + CoA + H(+). Its pathway is cofactor biosynthesis; coenzyme A biosynthesis. Catalyzes the GTP-dependent phosphorylation of the 3'-hydroxyl group of dephosphocoenzyme A to form coenzyme A (CoA). The polypeptide is GTP-dependent dephospho-CoA kinase (Methanosarcina acetivorans (strain ATCC 35395 / DSM 2834 / JCM 12185 / C2A)).